Here is a 631-residue protein sequence, read N- to C-terminus: ATP-dependent zinc metalloprotease FtsH (631 aa).

Residues 1–5 (MKKSN) lie on the Cytoplasmic side of the membrane. A helical transmembrane segment spans residues 6-26 (PWFVFFWITLLVIVLMFINFA). The Periplasmic portion of the chain corresponds to 27-102 (RQGGNEVELE…LEFSATEKSG (76 aa)). Residues 103 to 123 (WLGSLLLNWGPVVLLILFCFW) traverse the membrane as a helical segment. The Cytoplasmic portion of the chain corresponds to 124–631 (MMRGMSMGNK…KVINEKVIIS (508 aa)). An ATP-binding site is contributed by 196 to 203 (GSPGTGKT). His-418 lines the Zn(2+) pocket. The active site involves Glu-419. Zn(2+) contacts are provided by His-422 and Asp-494.

This sequence in the central section; belongs to the AAA ATPase family. The protein in the C-terminal section; belongs to the peptidase M41 family. As to quaternary structure, homohexamer. Zn(2+) serves as cofactor.

The protein resides in the cell inner membrane. Acts as a processive, ATP-dependent zinc metallopeptidase for both cytoplasmic and membrane proteins. Plays a role in the quality control of integral membrane proteins. This chain is ATP-dependent zinc metalloprotease FtsH, found in Endomicrobium trichonymphae.